We begin with the raw amino-acid sequence, 427 residues long: Glutamate-1-semialdehyde 2,1-aminomutase (427 aa).

N6-(pyridoxal phosphate)lysine is present on K265.

It belongs to the class-III pyridoxal-phosphate-dependent aminotransferase family. HemL subfamily. Homodimer. Requires pyridoxal 5'-phosphate as cofactor.

The protein resides in the cytoplasm. The enzyme catalyses (S)-4-amino-5-oxopentanoate = 5-aminolevulinate. It functions in the pathway porphyrin-containing compound metabolism; protoporphyrin-IX biosynthesis; 5-aminolevulinate from L-glutamyl-tRNA(Glu): step 2/2. The sequence is that of Glutamate-1-semialdehyde 2,1-aminomutase from Pseudomonas putida (strain W619).